Consider the following 139-residue polypeptide: Small ribosomal subunit protein eS12 (139 aa).

This sequence belongs to the eukaryotic ribosomal protein eS12 family. In terms of assembly, subunit of the 40S ribosomal complex. Part of the small subunit (SSU) processome, composed of more than 70 proteins and the RNA chaperone small nucleolar RNA (snoRNA) U3.

The protein resides in the nucleus. The protein localises to the nucleolus. Functionally, subunit of the 40S ribosomal complex. Part of the small subunit (SSU) processome, first precursor of the small eukaryotic ribosomal subunit. During the assembly of the SSU processome in the nucleolus, many ribosome biogenesis factors, an RNA chaperone and ribosomal proteins associate with the nascent pre-rRNA and work in concert to generate RNA folding, modifications, rearrangements and cleavage as well as targeted degradation of pre-ribosomal RNA by the RNA exosome. In wing imaginal disks, might have a role in translation rate, growth and cell competition, probably through regulation of Xrp1 expression. Might have a role in development and longevity. The protein is Small ribosomal subunit protein eS12 of Drosophila melanogaster (Fruit fly).